Consider the following 528-residue polypeptide: MTDLAPLRRALLSVSDKTGLVALGKALAARGVELLSTGGTARALRDAGLEVKDVAEVTGFPEMMDGRVKTLHPAVHGGLLALRDNDDHLAAMQEHGIAGIDLVVVNLYPFEQTVAKGAQYDEVIENIDIGGPAMIRSAAKNHGFVSVVVDVEDYDVLIAQLEAYDGHTTYALRQRLAQTAYARTAAYDTAVSTWMAAQVGEPPRRRSFGGTLAQTLRYGENPHQDAAFYLDGSNSPGVATARQLQGKELSYNNINDTDAAFELVSEFDQGDGPACAIIKHANPCGVARAETLTEAYRRAFDCDRTSAFGGIIALNQPLDGATAEEISSIFTEVVIAPGADAEAQEVFAKKKNLRLLTTDGLADPTAPGLAIRQVSGGYLVQDRDTGRLSADALQIVTKRAPSDQEMADLMFAWTVAKHVKSNAIIYVKDGATVGVGAGQMSRVDSTRIAARKAQDMAEAMGLPAPLTQGSVVASDAFFPFADGLITAAEAGATALIQPGGSMRDDEVIAAADEAGLAMVFTGMRHFRH.

In terms of domain architecture, MGS-like spans 2 to 149 (TDLAPLRRAL…KNHGFVSVVV (148 aa)).

Belongs to the PurH family.

The catalysed reaction is (6R)-10-formyltetrahydrofolate + 5-amino-1-(5-phospho-beta-D-ribosyl)imidazole-4-carboxamide = 5-formamido-1-(5-phospho-D-ribosyl)imidazole-4-carboxamide + (6S)-5,6,7,8-tetrahydrofolate. The enzyme catalyses IMP + H2O = 5-formamido-1-(5-phospho-D-ribosyl)imidazole-4-carboxamide. Its pathway is purine metabolism; IMP biosynthesis via de novo pathway; 5-formamido-1-(5-phospho-D-ribosyl)imidazole-4-carboxamide from 5-amino-1-(5-phospho-D-ribosyl)imidazole-4-carboxamide (10-formyl THF route): step 1/1. It functions in the pathway purine metabolism; IMP biosynthesis via de novo pathway; IMP from 5-formamido-1-(5-phospho-D-ribosyl)imidazole-4-carboxamide: step 1/1. The polypeptide is Bifunctional purine biosynthesis protein PurH (Roseobacter denitrificans (strain ATCC 33942 / OCh 114) (Erythrobacter sp. (strain OCh 114))).